Here is a 68-residue protein sequence, read N- to C-terminus: Conotoxin mr3g (68 aa).

The N-terminal stretch at 1-19 is a signal peptide; the sequence is MSKLGVLLTICLLLFALTA. Positions 20–51 are excised as a propeptide; it reads VPLDGDQPADRPAERMQDDISSERHPMFDAVR. 3 disulfides stabilise this stretch: cysteine 53-cysteine 67, cysteine 54-cysteine 63, and cysteine 59-cysteine 66. Proline 55 and proline 65 each carry 4-hydroxyproline. Cysteine 67 carries the post-translational modification Cysteine amide.

In terms of tissue distribution, expressed by the venom duct.

The protein localises to the secreted. Functionally, intracranially injection into mice does not elicit symptoms. This is Conotoxin mr3g from Conus marmoreus (Marble cone).